A 618-amino-acid polypeptide reads, in one-letter code: Grainyhead-like protein 1 homolog (618 aa).

Residues 1–91 (MTQEYDNKRP…EVEHPEPDHS (91 aa)) are transcription activation. Over residues 74-92 (RRSSTAKPEVEHPEPDHSK) the composition is skewed to basic and acidic residues. Positions 74-94 (RRSSTAKPEVEHPEPDHSKRN) are disordered. T208 is subject to Phosphothreonine. The 227-residue stretch at 248–474 (SGNNFEYTLE…DLDTQPVLFI (227 aa)) folds into the Grh/CP2 DB domain. 2 interaction with DNA regions span residues 380 to 389 (TDFSSQKGVK) and 427 to 430 (RKIR).

It belongs to the grh/CP2 family. Grainyhead subfamily. As to quaternary structure, binds DNA as homodimer. Homodimer, also forms heterodimers with GRHL2 or GRHL3. Post-translationally, methylation at Arg-9 and Lys-116 may be involved in regulating transcriptional activation.

Its subcellular location is the nucleus. Transcription factor involved in epithelial development. Binds directly to the consensus DNA sequence 5'-AACCGGTT-3'. Important regulator of DSG1 in the context of hair anchorage and epidermal differentiation, participates in the maintenance of the skin barrier. There is no genetic interaction with GRHL3, nor functional cooperativity due to diverse target gene selectivity during epithelia development. May play a role in regulating glucose homeostasis and insulin signaling. The chain is Grainyhead-like protein 1 homolog (GRHL1) from Pongo abelii (Sumatran orangutan).